We begin with the raw amino-acid sequence, 262 residues long: Apolipoprotein A-I-1 (262 aa).

The signal sequence occupies residues 1–18 (MKFLALALTILLAAGTQA). Positions 32 to 63 (VKAALSMYIAQVKLTAQRSIDLLDDTEYKEYK) are 3 X approximate tandem repeats. A run of 2 repeats spans residues 64–85 (MQLTQSLDNLQQYADATSQSLA) and 87–107 (YSEAFGTQLTDATAAVRAEVM). A 10 X approximate tandem repeats region spans residues 64–262 (MQLTQSLDNL…YETISQAMKA (199 aa)). A 3; half-length repeat occupies 108–118 (KDVEELRSQLE). Repeat copies occupy residues 119 to 140 (PKRAELKEVLDKHIDEYRKKLE), 141 to 162 (PLIKEHIELRRTEMEAFRAKME), 163 to 184 (PIVEELRAKVAINVEETKTKLM), 185 to 206 (PIVEIVRAKLTERLEELRTLAA), and 207 to 228 (PYAEEYKEQMIKAVGEVREKVS). Residues 229–239 (PLSEDFKGQVG) form a 9; half-length repeat. The stretch at 240 to 262 (PAAEQAKQKLLAFYETISQAMKA) is repeat 10.

The protein belongs to the apolipoprotein A1/A4/E family.

It is found in the secreted. Participates in the reverse transport of cholesterol from tissues to the liver for excretion by promoting cholesterol efflux from tissues and by acting as a cofactor for the lecithin cholesterol acyltransferase (LCAT). The sequence is that of Apolipoprotein A-I-1 from Oncorhynchus mykiss (Rainbow trout).